Reading from the N-terminus, the 239-residue chain is Protein canopy homolog 4 (239 aa).

A signal peptide spans 1 to 20 (MGPVRLGTLLFILTVYGAWA). Cystine bridges form between Cys37–Cys195, Cys40–Cys183, and Cys93–Cys155. Residues 199-239 (TWTGKEKITDGQEKTEEEEQDQEEEEMTNTPVHSQHDPEDL) are disordered. The span at 201 to 212 (TGKEKITDGQEK) shows a compositional bias: basic and acidic residues. The span at 213–225 (TEEEEQDQEEEEM) shows a compositional bias: acidic residues.

The protein belongs to the canopy family. As to quaternary structure, interacts with TLR4.

Its subcellular location is the secreted. Its function is as follows. Plays a role in the regulation of the cell surface expression of TLR4. This Bos taurus (Bovine) protein is Protein canopy homolog 4 (CNPY4).